Here is a 546-residue protein sequence, read N- to C-terminus: Alpha-taxilin (546 aa).

Disordered stretches follow at residues 1–170 (MKNQ…GLGK) and 482–546 (NKRV…SARA). Polar residues predominate over residues 11-21 (AKQSNPKSSPG). Basic and acidic residues-rich tracts occupy residues 70–80 (DVSEELSRQLE) and 143–158 (EEIR…DHRR). The residue at position 72 (S72) is a Phosphoserine. Residues 186-491 (EEKLAALCKK…NKRVQDLSAG (306 aa)) adopt a coiled-coil conformation. S515 carries the post-translational modification Phosphoserine. The span at 530-546 (TEASGQTGPQEPTSARA) shows a compositional bias: polar residues.

The protein belongs to the taxilin family. In terms of assembly, binds to the C-terminal coiled coil region of syntaxin family members STX1A, STX3A and STX4A, but not when these proteins are complexed with SNAP25, VAMP2 or STXBP1, suggesting that it interacts with syntaxins that do not form the SNARE complex. As to expression, ubiquitous, with much higher expression in heart, kidney, liver and pancreas.

In terms of biological role, may be involved in intracellular vesicle traffic and potentially in calcium-dependent exocytosis in neuroendocrine cells. The chain is Alpha-taxilin (TXLNA) from Homo sapiens (Human).